The following is a 35-amino-acid chain: PTEN upstream open reading frame MP31 (35 aa).

Interacts with lactate dehydrogenases LDHA and LDHB; interaction with mitochondrial LDH leads to inhibition of lactate dehydrogenase activity, preventing conversion of lactate to pyruvate. As to expression, detected in brain, kidney and liver (at protein level).

Its subcellular location is the mitochondrion. Functionally, inhibits lactate dehydrogenase (LDH)-mediated conversion of lactate to pyruvate in mitochondria by competing with mitochondrial LDH for binding to NAD(+). Also inhibits cellular lactate utilization. The protein is PTEN upstream open reading frame MP31 of Mus musculus (Mouse).